The sequence spans 358 residues: Protein ocs (358 aa).

The protein belongs to the lysopine/nopaline/octopine/opine/vitopine dehydrogenases family. Monomer.

It catalyses the reaction D-octopine + NAD(+) + H2O = L-arginine + pyruvate + NADH + H(+). The catalysed reaction is D-lysopine + NADP(+) + H2O = L-lysine + pyruvate + NADPH + H(+). Functionally, reductive condensation of pyruvate and arginine, lysine, histidine, or octopine to form octopine, lysopine, histopine, or octopinic acid, respectively. NADPH is the preferred cofactor, but NADH can also be used. The protein is Protein ocs (ocs) of Agrobacterium tumefaciens (strain Ach5).